Reading from the N-terminus, the 612-residue chain is DNA mismatch repair protein MutL (612 aa).

The protein belongs to the DNA mismatch repair MutL/HexB family.

Its function is as follows. This protein is involved in the repair of mismatches in DNA. It is required for dam-dependent methyl-directed DNA mismatch repair. May act as a 'molecular matchmaker', a protein that promotes the formation of a stable complex between two or more DNA-binding proteins in an ATP-dependent manner without itself being part of a final effector complex. This is DNA mismatch repair protein MutL from Herminiimonas arsenicoxydans.